A 194-amino-acid chain; its full sequence is Holliday junction branch migration complex subunit RuvA (194 aa).

The segment at 1–64 (MISRLTGKLV…EDAHLLFGFA (64 aa)) is domain I. The segment at 65-143 (TAEERKTFRQ…AHTVTDGLFA (79 aa)) is domain II. The interval 144-147 (ASPA) is flexible linker. The tract at residues 147–194 (AADETEDIVSTLLALGYNEREAKAAVKGVPKGTDVGEGVRLALKNLLK) is domain III.

The protein belongs to the RuvA family. As to quaternary structure, homotetramer. Forms an RuvA(8)-RuvB(12)-Holliday junction (HJ) complex. HJ DNA is sandwiched between 2 RuvA tetramers; dsDNA enters through RuvA and exits via RuvB. An RuvB hexamer assembles on each DNA strand where it exits the tetramer. Each RuvB hexamer is contacted by two RuvA subunits (via domain III) on 2 adjacent RuvB subunits; this complex drives branch migration. In the full resolvosome a probable DNA-RuvA(4)-RuvB(12)-RuvC(2) complex forms which resolves the HJ.

It localises to the cytoplasm. In terms of biological role, the RuvA-RuvB-RuvC complex processes Holliday junction (HJ) DNA during genetic recombination and DNA repair, while the RuvA-RuvB complex plays an important role in the rescue of blocked DNA replication forks via replication fork reversal (RFR). RuvA specifically binds to HJ cruciform DNA, conferring on it an open structure. The RuvB hexamer acts as an ATP-dependent pump, pulling dsDNA into and through the RuvAB complex. HJ branch migration allows RuvC to scan DNA until it finds its consensus sequence, where it cleaves and resolves the cruciform DNA. This is Holliday junction branch migration complex subunit RuvA from Neisseria gonorrhoeae (strain ATCC 700825 / FA 1090).